The primary structure comprises 2388 residues: Hybrid signal transduction histidine kinase M (2388 aa).

Disordered regions lie at residues 1–32 (MSNY…NNFN), 42–61 (FNTP…NSIS), 69–111 (NECN…STPI), 123–209 (NRSN…NAYP), 237–337 (TLLN…SPKL), 361–421 (SPHG…YNDN), 430–449 (TRNT…SSSF), and 486–542 (IYTP…NNNE). The span at 69–82 (NECNSGGEQSPKIK) shows a compositional bias: polar residues. Composition is skewed to low complexity over residues 83–110 (TNNN…KSTP), 125–206 (SNLN…SNSN), and 242–288 (SSNN…NNGG). Polar residues predominate over residues 293–306 (QFISSDNKYNTVGN). Residues 309–322 (HHHHHHQLHNHRHS) show a composition bias toward basic residues. Low complexity-rich tracts occupy residues 325–337 (QGSS…SPKL), 361–399 (SPHG…NQNN), 410–419 (NNSNDSFDYN), and 432–449 (NTGY…SSSF). Residues 489–505 (PPYPQPYPQPPQLPPPS) show a composition bias toward pro residues. The segment covering 506 to 541 (SSSSLSKENDNVDNNNTNNNNNNNNNNNNNNNNNNN) has biased composition (low complexity). The next 4 helical transmembrane spans lie at 550-570 (TMNL…FLMV), 589-609 (FILI…LLVV), 645-665 (YIFL…NLFF), and 679-699 (NIST…SHIP). A disordered region spans residues 732-888 (NNDNKNKIND…NNNEEDDEEE (157 aa)). The span at 735–744 (NKNKINDKSD) shows a compositional bias: basic and acidic residues. Low complexity predominate over residues 745 to 880 (NSNSITNNNN…NNNNNNNNNN (136 aa)). 3 helical membrane-spanning segments follow: residues 896 to 916 (FQIF…LIVL), 953 to 973 (VQFQ…LLLV), and 1025 to 1045 (CSVG…WMSI). The 407-residue stretch at 1093–1499 (RLVQNTGSII…VFELQVPMKC (407 aa)) folds into the Histidine kinase domain. Over residues 1236 to 1257 (PIHHHRHHHRHHHHHHHHHHHH) the composition is skewed to basic residues. The tract at residues 1236-1410 (PIHHHRHHHR…INNNINNNNN (175 aa)) is disordered. Acidic residues predominate over residues 1260–1274 (DDDDYDDDNDDDNNT). Over residues 1286–1315 (LSDKIKDNQDENLELKKSNNDKIIENKENQ) the composition is skewed to basic and acidic residues. Over residues 1316–1410 (ENNNNNNNNN…INNNINNNNN (95 aa)) the composition is skewed to low complexity. A Response regulatory 1 domain is found at 1541-1656 (KILVIDDNPN…QLTVLSQLLP (116 aa)). Residue Asp1592 is modified to 4-aspartylphosphate. Disordered regions lie at residues 1666 to 1702 (SNQN…NIDF), 1960 to 2022 (GNNS…NSSN), 2036 to 2121 (CKGD…DIIN), 2133 to 2183 (QQQL…VKSS), and 2218 to 2256 (NQLN…NNND). Residues 1676–1696 (SNGGGGGGGGGGGGGGGGGSG) are compositionally biased toward gly residues. Over residues 1974-1985 (TNNNTTTTTTTT) the composition is skewed to low complexity. Polar residues predominate over residues 1986-2010 (QPKKSPILTSSNGSDKSEGSTGSNR). A compositionally biased stretch (low complexity) spans 2054–2064 (DSSSSSSSSDS). The segment covering 2065-2076 (HGQDDHSYRLED) has biased composition (basic and acidic residues). Low complexity-rich tracts occupy residues 2078–2109 (SISS…SGIN) and 2133–2165 (QQQL…LPIP). Over residues 2169–2183 (INSSGASSGIKVKSS) the composition is skewed to polar residues. A Response regulatory 2 domain is found at 2262 to 2383 (NILLVEDNLV…LLISLLKKLV (122 aa)). Asp2313 carries the post-translational modification 4-aspartylphosphate.

In terms of processing, activation probably requires transfer of a phosphate group between a histidine in the kinase core (transmitter) domain and an aspartate of the receiver domain.

It localises to the membrane. The enzyme catalyses ATP + protein L-histidine = ADP + protein N-phospho-L-histidine.. In terms of biological role, acts as a receptor histidine kinase for a signal transduction pathway. This protein undergoes an ATP-dependent autophosphorylation at a conserved histidine residue in the kinase core, and a phosphoryl group is then transferred to a conserved aspartate residue in the receiver domain. The polypeptide is Hybrid signal transduction histidine kinase M (dhkM) (Dictyostelium discoideum (Social amoeba)).